A 146-amino-acid polypeptide reads, in one-letter code: Hemoglobin subunit beta-S/F (146 aa).

N-acetylvaline is present on valine 1. Positions 2–146 (HLTDGEKNAI…VANALSHKYH (145 aa)) constitute a Globin domain. Serine 44 carries the phosphoserine modification. Position 59 is an N6-acetyllysine (lysine 59). Histidine 63 contributes to the heme b binding site. An N6-acetyllysine modification is found at lysine 82. Histidine 92 serves as a coordination point for heme b. At cysteine 93 the chain carries S-nitrosocysteine. N6-acetyllysine is present on lysine 144.

Belongs to the globin family. In terms of assembly, heterotetramer of two alpha chains and two beta chains. As to expression, red blood cells.

Functionally, involved in oxygen transport from the lung to the various peripheral tissues. The chain is Hemoglobin subunit beta-S/F from Urocitellus townsendii (Townsend's ground squirrel).